Consider the following 122-residue polypeptide: Large ribosomal subunit protein uL14 (122 aa).

It belongs to the universal ribosomal protein uL14 family. In terms of assembly, part of the 50S ribosomal subunit. Forms a cluster with proteins L3 and L19. In the 70S ribosome, L14 and L19 interact and together make contacts with the 16S rRNA in bridges B5 and B8.

Binds to 23S rRNA. Forms part of two intersubunit bridges in the 70S ribosome. This Chlorobium phaeovibrioides (strain DSM 265 / 1930) (Prosthecochloris vibrioformis (strain DSM 265)) protein is Large ribosomal subunit protein uL14.